The chain runs to 227 residues: Cytochrome c oxidase subunit 2 (227 aa).

Residues 1-14 (MAYPLQLGLQDASS) lie on the Mitochondrial intermembrane side of the membrane. Residues 15–45 (PIMEELMNFHDHTLMIVFLISSLVLYLISLM) traverse the membrane as a helical segment. Topologically, residues 46 to 59 (LTTKLIHTSTMDAQ) are mitochondrial matrix. A helical transmembrane segment spans residues 60-87 (EVETVWTILPAIILILIALPSLRILYMM). The Mitochondrial intermembrane portion of the chain corresponds to 88-227 (DEINNPVLTV…LFENWSLSLT (140 aa)). The Cu cation site is built by His161, Cys196, Glu198, Cys200, His204, and Met207. Residue Glu198 participates in Mg(2+) binding.

It belongs to the cytochrome c oxidase subunit 2 family. As to quaternary structure, component of the cytochrome c oxidase (complex IV, CIV), a multisubunit enzyme composed of 14 subunits. The complex is composed of a catalytic core of 3 subunits MT-CO1, MT-CO2 and MT-CO3, encoded in the mitochondrial DNA, and 11 supernumerary subunits COX4I, COX5A, COX5B, COX6A, COX6B, COX6C, COX7A, COX7B, COX7C, COX8 and NDUFA4, which are encoded in the nuclear genome. The complex exists as a monomer or a dimer and forms supercomplexes (SCs) in the inner mitochondrial membrane with NADH-ubiquinone oxidoreductase (complex I, CI) and ubiquinol-cytochrome c oxidoreductase (cytochrome b-c1 complex, complex III, CIII), resulting in different assemblies (supercomplex SCI(1)III(2)IV(1) and megacomplex MCI(2)III(2)IV(2)). Found in a complex with TMEM177, COA6, COX18, COX20, SCO1 and SCO2. Interacts with TMEM177 in a COX20-dependent manner. Interacts with COX20. Interacts with COX16. The cofactor is Cu cation.

It localises to the mitochondrion inner membrane. It carries out the reaction 4 Fe(II)-[cytochrome c] + O2 + 8 H(+)(in) = 4 Fe(III)-[cytochrome c] + 2 H2O + 4 H(+)(out). Its function is as follows. Component of the cytochrome c oxidase, the last enzyme in the mitochondrial electron transport chain which drives oxidative phosphorylation. The respiratory chain contains 3 multisubunit complexes succinate dehydrogenase (complex II, CII), ubiquinol-cytochrome c oxidoreductase (cytochrome b-c1 complex, complex III, CIII) and cytochrome c oxidase (complex IV, CIV), that cooperate to transfer electrons derived from NADH and succinate to molecular oxygen, creating an electrochemical gradient over the inner membrane that drives transmembrane transport and the ATP synthase. Cytochrome c oxidase is the component of the respiratory chain that catalyzes the reduction of oxygen to water. Electrons originating from reduced cytochrome c in the intermembrane space (IMS) are transferred via the dinuclear copper A center (CU(A)) of subunit 2 and heme A of subunit 1 to the active site in subunit 1, a binuclear center (BNC) formed by heme A3 and copper B (CU(B)). The BNC reduces molecular oxygen to 2 water molecules using 4 electrons from cytochrome c in the IMS and 4 protons from the mitochondrial matrix. This chain is Cytochrome c oxidase subunit 2 (MT-CO2), found in Taterillus emini (Emin's gerbil).